The following is an 894-amino-acid chain: UPF0182 protein GSU2333 (894 aa).

7 helical membrane passes run 6 to 26 (FLLI…LITF), 50 to 70 (VGAG…NLYF), 98 to 118 (MVQM…LLAG), 162 to 182 (KGFV…VYFF), 203 to 223 (LAIL…LDAV), 250 to 270 (ILTL…WKGA), and 275 to 295 (LIPP…YPAM).

The protein belongs to the UPF0182 family.

The protein localises to the cell membrane. The chain is UPF0182 protein GSU2333 from Geobacter sulfurreducens (strain ATCC 51573 / DSM 12127 / PCA).